Here is a 313-residue protein sequence, read N- to C-terminus: MMENYKHTTVLLDEAVNGLNIRPDGIYIDGTFGRGGHSRLILSQFGEEGRLLAIDRDPQAIAVAKTIDDPRFSIIHGPFSALGDYVAERDLIGKIDGILLDLGVSSPQLDDAERGFSFMRDGPLDMRMDPTRGQSAAEWLQTAEEADIAWVLKTYGEERFAKRIARAIVERNREQPMTRTKELAEVVAAATPVKDKFKHPATRTFQAVRIWVNSELEEIEQALKSSLNVLAPGGRLSIISFHSLEDRIVKRFMRENSRGPQVPAGLPMTEEQLKKLGGRQLRALGKLMPGEEEVAENPRARSSVLRIAERTNA.

Residues 35–37 (GGH), Asp55, Phe79, Asp101, and Gln108 contribute to the S-adenosyl-L-methionine site.

It belongs to the methyltransferase superfamily. RsmH family.

Its subcellular location is the cytoplasm. The enzyme catalyses cytidine(1402) in 16S rRNA + S-adenosyl-L-methionine = N(4)-methylcytidine(1402) in 16S rRNA + S-adenosyl-L-homocysteine + H(+). In terms of biological role, specifically methylates the N4 position of cytidine in position 1402 (C1402) of 16S rRNA. In Escherichia coli O7:K1 (strain IAI39 / ExPEC), this protein is Ribosomal RNA small subunit methyltransferase H.